The sequence spans 295 residues: Small ribosomal subunit protein uS2 (295 aa).

Ser-2 bears the N-acetylserine mark. The residue at position 43 (Ser-43) is a Phosphoserine. The residue at position 52 (Lys-52) is an N6-acetyllysine. An interaction with PPP1R16B region spans residues 54-113 (TWEKLLLAARAIVAIENPADVSVISSRNTGQRAVLKFAAATGATPIAGRFTPGTFTNQIQ). Position 89 is an N6-acetyllysine; alternate (Lys-89). Residue Lys-89 forms a Glycyl lysine isopeptide (Lys-Gly) (interchain with G-Cter in SUMO2); alternate linkage. A Phosphothreonine modification is found at Thr-97. 2 laminin-binding regions span residues 161–180 (IPCN…MLAR) and 205–229 (RDPE…EFQG). [DE]-W-[ST] repeat units follow at residues 230–232 (EWT), 247–249 (DWS), 266–268 (DWS), 275–277 (DWS), and 293–295 (EWS). Residues 242-295 (QPEVADWSEGVQVPSVPIQQFPTEDWSAQPATEDWSAAPTAQATEWVGATTEWS) are laminin-binding. The tract at residues 266 to 295 (DWSAQPATEDWSAAPTAQATEWVGATTEWS) is disordered.

It belongs to the universal ribosomal protein uS2 family. In terms of assembly, monomer (37LRP) and homodimer (67LR). Component of the small ribosomal subunit. Mature ribosomes consist of a small (40S) and a large (60S) subunit. The 40S subunit contains about 33 different proteins and 1 molecule of RNA (18S). The 60S subunit contains about 49 different proteins and 3 molecules of RNA (28S, 5.8S and 5S). Interacts with RPS21. Interacts with several laminins including at least LAMB1. Interacts with MDK. The mature dimeric form interacts with PPP1R16B (via its fourth ankyrin repeat). Interacts with PPP1CA only in the presence of PPP1R16B. Acylated. Acylation may be a prerequisite for conversion of the monomeric 37 kDa laminin receptor precursor (37LRP) to the mature dimeric 67 kDa laminin receptor (67LR), and may provide a mechanism for membrane association. In terms of processing, cleaved by stromelysin-3 (ST3) at the cell surface. Cleavage by stromelysin-3 may be a mechanism to alter cell-extracellular matrix interactions.

The protein resides in the cell membrane. It localises to the cytoplasm. Its subcellular location is the nucleus. Functionally, required for the assembly and/or stability of the 40S ribosomal subunit. Required for the processing of the 20S rRNA-precursor to mature 18S rRNA in a late step of the maturation of 40S ribosomal subunits. Also functions as a cell surface receptor for laminin. Plays a role in cell adhesion to the basement membrane and in the consequent activation of signaling transduction pathways. May play a role in cell fate determination and tissue morphogenesis. Also acts as a receptor for several other ligands, including the pathogenic prion protein, viruses, and bacteria. Acts as a PPP1R16B-dependent substrate of PPP1CA. This Chlorocebus aethiops (Green monkey) protein is Small ribosomal subunit protein uS2.